A 262-amino-acid chain; its full sequence is 4-hydroxy-2-oxo-heptane-1,7-dioate aldolase (262 aa).

Residue histidine 45 is the Proton acceptor of the active site. Glutamine 147 lines the substrate pocket. Position 149 (glutamate 149) interacts with a divalent metal cation. Positions 174 and 175 each coordinate substrate. Aspartate 175 contacts a divalent metal cation.

This sequence belongs to the HpcH/HpaI aldolase family. Homohexamer; trimer of dimers. A divalent metal cation serves as cofactor.

The catalysed reaction is 4-hydroxy-2-oxoheptanedioate = succinate semialdehyde + pyruvate. The enzyme catalyses D-glyceraldehyde + 3-hydroxypyruvate = (3R,4S,5R)-3,4,5,6-tetrahydroxy-2-oxohexanoate. It carries out the reaction D-glyceraldehyde + 3-hydroxypyruvate = 2-dehydro-D-gluconate. It catalyses the reaction D-glyceraldehyde + 3-hydroxypyruvate = 2-dehydro-D-galactonate. The catalysed reaction is D-glyceraldehyde + pyruvate = 2-dehydro-3-deoxy-L-galactonate. The enzyme catalyses 2-dehydro-3-deoxy-D-gluconate = D-glyceraldehyde + pyruvate. It participates in aromatic compound metabolism; 4-hydroxyphenylacetate degradation; pyruvate and succinate semialdehyde from 4-hydroxyphenylacetate: step 7/7. Catalyzes the reversible retro-aldol cleavage of 4-hydroxy-2-ketoheptane-1,7-dioate (HKHD) to pyruvate and succinic semialdehyde. In vitro, can catalyze the aldolisation reaction between hydroxypyruvate (HPA) or pyruvate (PA) and D-glyceraldehyde (D-GA). The condensation of hydroxypyruvate and D-glyceraldehyde produces (3R,4S,5R)-3,4,5,6-tetrahydroxy-2-oxohexanoate as the major product, 2-dehydro-D-gluconate and 2-dehydro-D-galactonate. The condensation of pyruvate and D-glyceraldehyde produces 2-dehydro-3-deoxy-L-galactonate as the major product and 2-dehydro-3-deoxy-D-gluconate. This Escherichia coli (strain ATCC 8739 / DSM 1576 / NBRC 3972 / NCIMB 8545 / WDCM 00012 / Crooks) protein is 4-hydroxy-2-oxo-heptane-1,7-dioate aldolase.